Here is a 746-residue protein sequence, read N- to C-terminus: Methyl-CpG-binding domain-containing protein 13 (746 aa).

Short sequence motifs (nuclear localization signal) lie at residues 13 to 20 (ERKVEIRV) and 44 to 51 (IKKLEITN). In terms of domain architecture, MBD spans 29–104 (VIVEKSAAQG…KESDIEDDDS (76 aa)). Disordered stretches follow at residues 131-157 (IDDV…MTSD), 169-283 (LGKK…PTPE), 295-328 (PLDD…KTRT), 348-479 (TKVQ…LKSP), 518-562 (TAAG…SGSA), and 696-746 (EPDT…FSKD). The segment covering 169–180 (LGKKEEVKDPIE) has biased composition (basic and acidic residues). Positions 190–199 (RSQTKASTTE) are enriched in polar residues. The span at 244-260 (SSEKRITRSKVEEKKNE) shows a compositional bias: basic and acidic residues. The Nuclear localization signal signature appears at 256–263 (EKKNELSN). Over residues 427–451 (VAQSCNEQSSQKPHAAAATSNNRVS) the composition is skewed to polar residues. Residues 465–476 (VGRKPSKDKKTL) are compositionally biased toward basic residues. 2 stretches are compositionally biased toward polar residues: residues 529–546 (PKAN…SPLR) and 702–730 (KSQG…TNKT). Residues 732–746 (GKPDDLRFTQSFSKD) show a composition bias toward basic and acidic residues.

The protein resides in the nucleus. Functionally, probable transcriptional regulator. This is Methyl-CpG-binding domain-containing protein 13 (MBD13) from Arabidopsis thaliana (Mouse-ear cress).